Reading from the N-terminus, the 512-residue chain is 2-isopropylmalate synthase (512 aa).

The Pyruvate carboxyltransferase domain occupies Ile-4 to Lys-266. The Mn(2+) site is built by Asp-13, His-201, His-203, and Asn-237. Positions Glu-390 to Lys-512 are regulatory domain.

This sequence belongs to the alpha-IPM synthase/homocitrate synthase family. LeuA type 1 subfamily. Homodimer. It depends on Mn(2+) as a cofactor.

The protein localises to the cytoplasm. It carries out the reaction 3-methyl-2-oxobutanoate + acetyl-CoA + H2O = (2S)-2-isopropylmalate + CoA + H(+). The protein operates within amino-acid biosynthesis; L-leucine biosynthesis; L-leucine from 3-methyl-2-oxobutanoate: step 1/4. In terms of biological role, catalyzes the condensation of the acetyl group of acetyl-CoA with 3-methyl-2-oxobutanoate (2-ketoisovalerate) to form 3-carboxy-3-hydroxy-4-methylpentanoate (2-isopropylmalate). The chain is 2-isopropylmalate synthase from Listeria innocua serovar 6a (strain ATCC BAA-680 / CLIP 11262).